Here is a 941-residue protein sequence, read N- to C-terminus: Probable respiratory burst oxidase homolog protein I (941 aa).

Residues 1–374 (MSMSFSGGTH…LYSLQDNWKR (374 aa)) lie on the Cytoplasmic side of the membrane. Disordered stretches follow at residues 29–48 (PSLP…SGEE) and 103–166 (ERLT…SGTE). Over residues 36 to 45 (SPSPSSSSSS) the composition is skewed to low complexity. Over residues 103–117 (ERLTAGTNSKQQIQK) the composition is skewed to polar residues. 2 EF-hand-like regions span residues 196–204 (SKDGYLFKS) and 232–243 (RRIMVDKINLQE). Positions 254–289 (ESFDSRLQIFFNMVKNGDGRITENEVKEIIILSASA) constitute an EF-hand domain. Ca(2+) is bound by residues N269, D271, R273, and E278. Phosphoserine is present on residues S346 and S350. A helical membrane pass occupies residues 375-395 (IWVLTLWFVIMAWLFMWKCYQ). Topologically, residues 396 to 407 (YKHKDAFHVMGY) are extracellular. A helical membrane pass occupies residues 408 to 428 (CLVMAKGAAETLKFNMALILL). The region spanning 413–570 (KGAAETLKFN…LLLTVYVLLV (158 aa)) is the Ferric oxidoreductase domain. Over 429-514 (PVCRNTITYL…YFGLVNTPVG (86 aa)) the chain is Cytoplasmic. The helical transmembrane segment at 515–535 (ITGIIMVAFMLIAFTLASRRC) threads the bilayer. Residues 536-557 (RRNLTKLPKPFDKLTGYNAFWY) lie on the Extracellular side of the membrane. The chain crosses the membrane as a helical span at residues 558 to 578 (SHHLLLTVYVLLVIHGVSLYL). Topologically, residues 579 to 586 (EHKWYRKT) are cytoplasmic. A helical membrane pass occupies residues 587–604 (VWMYLAVPVLLYVGERIF). The Extracellular segment spans residues 605 to 731 (RFFRSRLYTV…PYGAPAQDHW (127 aa)). The FAD-binding FR-type domain occupies 609 to 729 (SRLYTVEICK…DGPYGAPAQD (121 aa)). A helical membrane pass occupies residues 732-752 (KYDVVLLVGLGIGATPFVSIL). The Cytoplasmic segment spans residues 753-941 (RDLLNNIIKQ…TRFDFHKEQF (189 aa)).

The protein belongs to the RBOH (TC 5.B.1.3) family. In terms of assembly, monomer and homodimer.

The protein localises to the membrane. Its function is as follows. Calcium-dependent NADPH oxidase that generates superoxide. The sequence is that of Probable respiratory burst oxidase homolog protein I (RBOHI) from Arabidopsis thaliana (Mouse-ear cress).